The primary structure comprises 189 residues: Accessory gene regulator protein B (189 aa).

5 helical membrane passes run 49 to 69, 81 to 100, 110 to 130, 143 to 163, and 164 to 184; these read IAYI…FYLI, SFWC…LVIV, IILT…ATKK, YYAI…KEPF, and AQFI…IFFI.

Belongs to the AgrB family.

The protein resides in the cell membrane. Functionally, essential for the production of a quorum sensing system signal molecule, the autoinducing peptide (AIP). This quorum sensing system is responsible for the regulation of the expression of virulence factor genes. Involved in the proteolytic processing of AgrD, the precursor of AIP. The protein is Accessory gene regulator protein B of Staphylococcus aureus (strain COL).